Consider the following 149-residue polypeptide: D-aminoacyl-tRNA deacylase (149 aa).

The short motif at 137 to 138 is the Gly-cisPro motif, important for rejection of L-amino acids element; that stretch reads GP.

This sequence belongs to the DTD family. As to quaternary structure, homodimer.

The protein resides in the cytoplasm. It carries out the reaction glycyl-tRNA(Ala) + H2O = tRNA(Ala) + glycine + H(+). The catalysed reaction is a D-aminoacyl-tRNA + H2O = a tRNA + a D-alpha-amino acid + H(+). In terms of biological role, an aminoacyl-tRNA editing enzyme that deacylates mischarged D-aminoacyl-tRNAs. Also deacylates mischarged glycyl-tRNA(Ala), protecting cells against glycine mischarging by AlaRS. Acts via tRNA-based rather than protein-based catalysis; rejects L-amino acids rather than detecting D-amino acids in the active site. By recycling D-aminoacyl-tRNA to D-amino acids and free tRNA molecules, this enzyme counteracts the toxicity associated with the formation of D-aminoacyl-tRNA entities in vivo and helps enforce protein L-homochirality. This Anaeromyxobacter dehalogenans (strain 2CP-C) protein is D-aminoacyl-tRNA deacylase.